We begin with the raw amino-acid sequence, 306 residues long: Dihydroorotate dehydrogenase B (NAD(+)), catalytic subunit (306 aa).

Residues Ser22 and 46 to 47 (KT) contribute to the FMN site. Substrate contacts are provided by residues Lys46, 70–74 (NSIGL), and Asn128. Asn128 is an FMN binding site. Cys131 acts as the Nucleophile in catalysis. Position 164 (Lys164) interacts with FMN. 191 to 192 (NT) is a substrate binding site. FMN is bound by residues Gly216, 242-243 (GG), and 264-265 (GS).

This sequence belongs to the dihydroorotate dehydrogenase family. Type 1 subfamily. As to quaternary structure, heterotetramer of 2 PyrK and 2 PyrD type B subunits. The cofactor is FMN.

It is found in the cytoplasm. It catalyses the reaction (S)-dihydroorotate + NAD(+) = orotate + NADH + H(+). The protein operates within pyrimidine metabolism; UMP biosynthesis via de novo pathway; orotate from (S)-dihydroorotate (NAD(+) route): step 1/1. In terms of biological role, catalyzes the conversion of dihydroorotate to orotate with NAD(+) as electron acceptor. In Endomicrobium trichonymphae, this protein is Dihydroorotate dehydrogenase B (NAD(+)), catalytic subunit (pyrD).